A 110-amino-acid polypeptide reads, in one-letter code: Large ribosomal subunit protein uL22 (110 aa).

The protein belongs to the universal ribosomal protein uL22 family. As to quaternary structure, part of the 50S ribosomal subunit.

In terms of biological role, this protein binds specifically to 23S rRNA; its binding is stimulated by other ribosomal proteins, e.g. L4, L17, and L20. It is important during the early stages of 50S assembly. It makes multiple contacts with different domains of the 23S rRNA in the assembled 50S subunit and ribosome. Its function is as follows. The globular domain of the protein is located near the polypeptide exit tunnel on the outside of the subunit, while an extended beta-hairpin is found that lines the wall of the exit tunnel in the center of the 70S ribosome. This Colwellia psychrerythraea (strain 34H / ATCC BAA-681) (Vibrio psychroerythus) protein is Large ribosomal subunit protein uL22.